The chain runs to 203 residues: Large ribosomal subunit protein bL25 (203 aa).

Residues 1 to 21 form a disordered region; sequence MMENLQVNQREKKTRHSSRQC. Basic residues predominate over residues 12 to 21; sequence KKTRHSSRQC.

It belongs to the bacterial ribosomal protein bL25 family. CTC subfamily. In terms of assembly, part of the 50S ribosomal subunit; part of the 5S rRNA/L5/L18/L25 subcomplex. Contacts the 5S rRNA. Binds to the 5S rRNA independently of L5 and L18.

Its function is as follows. This is one of the proteins that binds to the 5S RNA in the ribosome where it forms part of the central protuberance. This chain is Large ribosomal subunit protein bL25, found in Clostridium perfringens (strain 13 / Type A).